Consider the following 1526-residue polypeptide: Myosin type-2 heavy chain 1 (1526 aa).

The 52-residue stretch at 22–73 folds into the Myosin N-terminal SH3-like domain; that stretch reads DDKRWVWISDPETAFTKAWIKEDLPDKKYVVRYNNSRDEKIVGEDEIDPVNP. The region spanning 77 to 755 is the Myosin motor domain; that stretch reads DRVNDMAELT…VLAELEERRV (679 aa). ATP is bound at residue 170-177; it reads GESGAGKT. Actin-binding stretches follow at residues 634 to 656 and 734 to 748; these read LNQL…VPNE and RIGV…GVLA. In terms of domain architecture, IQ spans 758 to 787; it reads LQRLMTMLQTRIRGFLQRKIFQKRLKDIQA. The stretch at 875–1244 forms a coiled coil; it reads ALDKEEILRR…SLTKQVNELS (370 aa). Position 1044 is a phosphoserine (S1044).

The protein belongs to the TRAFAC class myosin-kinesin ATPase superfamily. Myosin family. Binds to cdc4 and rlc1.

Its function is as follows. Required for cell division. It is a component of the cdc12 'spot', a structure thought to mark the site of septation. May work in conjunction with myo3. This Schizosaccharomyces pombe (strain 972 / ATCC 24843) (Fission yeast) protein is Myosin type-2 heavy chain 1 (myo2).